A 388-amino-acid chain; its full sequence is Fetuin-B (388 aa).

The signal sequence occupies residues 1-18; the sequence is MGLLRLLVLCTLAACCMA. 2 consecutive Cystatin fetuin-B-type domains span residues 28 to 141 and 152 to 264; these read QRPL…YNCT and TTCP…VTCE. Residue asparagine 40 is glycosylated (N-linked (GlcNAc...) asparagine). 5 disulfides stabilise this stretch: cysteine 96–cysteine 107, cysteine 120–cysteine 140, cysteine 154–cysteine 157, cysteine 217–cysteine 224, and cysteine 237–cysteine 263. Asparagine 139 is a glycosylation site (N-linked (GlcNAc...) asparagine). 2 disordered regions span residues 270–343 and 367–388; these read AQVP…PQGD and KEQRSAECPGPEKENNPLVLPP. Residues 279-300 show a composition bias toward polar residues; the sequence is AVTQGPQKLPQKNTAPTSSPSV. O-linked (GalNAc...) threonine glycosylation is found at threonine 292 and threonine 295. A Phosphoserine modification is found at serine 321. The segment covering 367–381 has biased composition (basic and acidic residues); that stretch reads KEQRSAECPGPEKEN.

This sequence belongs to the fetuin family. As to expression, liver, lung and tongue.

The protein resides in the secreted. Its function is as follows. Protease inhibitor required for egg fertilization. Required to prevent premature zona pellucida hardening before fertilization, probably by inhibiting the protease activity of ASTL, a protease that mediates the cleavage of ZP2 and triggers zona pellucida hardening. In Mus musculus (Mouse), this protein is Fetuin-B (Fetub).